The chain runs to 301 residues: MNSASACCWWRLALPIADELEESLIWKLTELGISRIAVQHVPEKAERTLLAWLPSSEWSESDRDQLMVNLRPLAEPFGLQLANPTWCEVADEDWSLNWKQHWQSDPVGQRLLILPAWLDLPQEYADRLVVRMDPGSAFGTGSHPSTRLCLEALEKNPPLGLRVADLGCGSGVLGFAALGFGARQVLAADTDSQAVCASRANAELNQLDLDRFRVVHGSVDALSAQLQGEVVDLLLCNILAPVIEALASSFDQLLSANGRCLLSGLLVDQAPRLQVVLEALGWRVNSLTVQGCWGLLDVSKR.

Residues Thr146, Gly167, Asp189, and Asn237 each coordinate S-adenosyl-L-methionine.

It belongs to the methyltransferase superfamily. PrmA family.

Its subcellular location is the cytoplasm. It catalyses the reaction L-lysyl-[protein] + 3 S-adenosyl-L-methionine = N(6),N(6),N(6)-trimethyl-L-lysyl-[protein] + 3 S-adenosyl-L-homocysteine + 3 H(+). Functionally, methylates ribosomal protein L11. The chain is Ribosomal protein L11 methyltransferase from Prochlorococcus marinus (strain MIT 9303).